Reading from the N-terminus, the 286-residue chain is uncharacterized protein (286 aa).

This is an uncharacterized protein from Acidianus convivator (ATV).